Consider the following 475-residue polypeptide: Protein nucleotidyltransferase YdiU (475 aa).

ATP-binding residues include Gly82, Gly84, Arg85, Lys105, Asp117, Gly118, Arg168, and Arg175. Asp240 functions as the Proton acceptor in the catalytic mechanism. Mg(2+) is bound by residues Asn241 and Asp250. An ATP-binding site is contributed by Asp250.

It belongs to the SELO family. Mg(2+) is required as a cofactor. The cofactor is Mn(2+).

The catalysed reaction is L-seryl-[protein] + ATP = 3-O-(5'-adenylyl)-L-seryl-[protein] + diphosphate. It catalyses the reaction L-threonyl-[protein] + ATP = 3-O-(5'-adenylyl)-L-threonyl-[protein] + diphosphate. It carries out the reaction L-tyrosyl-[protein] + ATP = O-(5'-adenylyl)-L-tyrosyl-[protein] + diphosphate. The enzyme catalyses L-histidyl-[protein] + UTP = N(tele)-(5'-uridylyl)-L-histidyl-[protein] + diphosphate. The catalysed reaction is L-seryl-[protein] + UTP = O-(5'-uridylyl)-L-seryl-[protein] + diphosphate. It catalyses the reaction L-tyrosyl-[protein] + UTP = O-(5'-uridylyl)-L-tyrosyl-[protein] + diphosphate. Functionally, nucleotidyltransferase involved in the post-translational modification of proteins. It can catalyze the addition of adenosine monophosphate (AMP) or uridine monophosphate (UMP) to a protein, resulting in modifications known as AMPylation and UMPylation. This Aeromonas salmonicida (strain A449) protein is Protein nucleotidyltransferase YdiU.